The chain runs to 133 residues: uncharacterized protein (133 aa).

The segment at 107 to 133 (TSHHRAAGLQSQHAPGSGRVRITGGKV) is disordered.

This is an uncharacterized protein from Homo sapiens (Human).